The chain runs to 227 residues: Biosynthetic peptidoglycan transglycosylase (227 aa).

Residues 7–27 (VALLTLLLLVAAPYVLTLVYG) traverse the membrane as a helical segment.

The protein belongs to the glycosyltransferase 51 family.

It localises to the cell inner membrane. The catalysed reaction is [GlcNAc-(1-&gt;4)-Mur2Ac(oyl-L-Ala-gamma-D-Glu-L-Lys-D-Ala-D-Ala)](n)-di-trans,octa-cis-undecaprenyl diphosphate + beta-D-GlcNAc-(1-&gt;4)-Mur2Ac(oyl-L-Ala-gamma-D-Glu-L-Lys-D-Ala-D-Ala)-di-trans,octa-cis-undecaprenyl diphosphate = [GlcNAc-(1-&gt;4)-Mur2Ac(oyl-L-Ala-gamma-D-Glu-L-Lys-D-Ala-D-Ala)](n+1)-di-trans,octa-cis-undecaprenyl diphosphate + di-trans,octa-cis-undecaprenyl diphosphate + H(+). The protein operates within cell wall biogenesis; peptidoglycan biosynthesis. In terms of biological role, peptidoglycan polymerase that catalyzes glycan chain elongation from lipid-linked precursors. This Rhodopseudomonas palustris (strain HaA2) protein is Biosynthetic peptidoglycan transglycosylase.